A 198-amino-acid polypeptide reads, in one-letter code: Peptidyl-tRNA hydrolase (198 aa).

Residue Tyr18 coordinates tRNA. Catalysis depends on His23, which acts as the Proton acceptor. TRNA-binding residues include Phe69, Asn71, and Asn117.

It belongs to the PTH family. As to quaternary structure, monomer.

Its subcellular location is the cytoplasm. It carries out the reaction an N-acyl-L-alpha-aminoacyl-tRNA + H2O = an N-acyl-L-amino acid + a tRNA + H(+). Functionally, hydrolyzes ribosome-free peptidyl-tRNAs (with 1 or more amino acids incorporated), which drop off the ribosome during protein synthesis, or as a result of ribosome stalling. In terms of biological role, catalyzes the release of premature peptidyl moieties from peptidyl-tRNA molecules trapped in stalled 50S ribosomal subunits, and thus maintains levels of free tRNAs and 50S ribosomes. This chain is Peptidyl-tRNA hydrolase, found in Idiomarina loihiensis (strain ATCC BAA-735 / DSM 15497 / L2-TR).